The primary structure comprises 229 residues: MAKYKALASLRYLACLVFLPWGISISFQKGLEPWVTNWWNTGQSREFSDYLQEENALERFGEIEELFLLERMVEDSSETHSQDLRIEIRKKTIQLVEMYNEDLIQIISHLLANFICFATPGAYFILGKEKLVVLNSWIQELFHSLSDTMKAFSILLVTDLCIGFHSPHGWELMIDSISENYGFSHDEQRISGLVSTFPVISDTIFKYWIFRHLNRISPSLVVIYHSMNE.

The next 2 membrane-spanning stretches (helical) occupy residues 7–27 and 106–126; these read LASL…SISF and IISH…YFIL.

Belongs to the CemA family.

Its subcellular location is the plastid. The protein localises to the chloroplast inner membrane. The enzyme catalyses K(+)(in) + H(+)(out) = K(+)(out) + H(+)(in). In terms of biological role, contributes to K(+)/H(+) antiport activity by supporting proton efflux to control proton extrusion and homeostasis in chloroplasts in a light-dependent manner to modulate photosynthesis. Prevents excessive induction of non-photochemical quenching (NPQ) under continuous-light conditions. Indirectly promotes efficient inorganic carbon uptake into chloroplasts. The polypeptide is Potassium/proton antiporter CemA (Cycas taitungensis (Prince sago)).